The chain runs to 341 residues: Pre-mRNA-processing protein 45 (341 aa).

Disordered stretches follow at residues 1–31, 181–226, and 302–341; these read MFSS…HEKS, NYQE…EDQA, and EQHE…KTKY. The segment covering 192 to 201 has biased composition (basic residues); sequence FKLRKNRHKN. Basic and acidic residues predominate over residues 302–318; sequence EQHEKENKLKELADIAR.

It belongs to the SNW family. In terms of assembly, associated with the spliceosome.

Its subcellular location is the nucleus. Its function is as follows. Involved in pre-mRNA splicing. This Debaryomyces hansenii (strain ATCC 36239 / CBS 767 / BCRC 21394 / JCM 1990 / NBRC 0083 / IGC 2968) (Yeast) protein is Pre-mRNA-processing protein 45 (PRP45).